Here is a 397-residue protein sequence, read N- to C-terminus: Lysophospholipid transporter LplT (397 aa).

At 1 to 17 (MSESVHTNTSLWSKGMK) the chain is on the periplasmic side. A helical membrane pass occupies residues 18–38 (AVIVAQFLSAFGDNALLFATL). The Cytoplasmic segment spans residues 39–52 (ALLKAQFYPEWSQP). Residues 53 to 73 (ILQMVFVGAYILFAPFVGQVA) form a helical membrane-spanning segment. The Periplasmic portion of the chain corresponds to 74-90 (DSFAKGRVMMFANGLKL). Residues 91–111 (LGAASICFGINPFLGYTLVGV) form a helical membrane-spanning segment. Topologically, residues 112-144 (GAAAYSPAKYGILGELTTGSKLVKANGLMEAST) are cytoplasmic. A helical membrane pass occupies residues 145–165 (IAAILLGSVAGGVLADWHVLV). Position 166 (A166) is a topological domain, periplasmic. A helical membrane pass occupies residues 167–187 (LAACALAYGGAVVANIYIPKL). Topologically, residues 188-226 (AAARPGQSWNLINMTRSFLNACTSLWRNGETRFSLVGTS) are cytoplasmic. The chain crosses the membrane as a helical span at residues 227-247 (LFWGAGVTLRFLLVLWVPVAL). At 248-256 (GITDNATPT) the chain is on the periplasmic side. A helical transmembrane segment spans residues 257–277 (YLNAMVAIGIVVGAGAAAKLV). At 278-280 (TLE) the chain is on the cytoplasmic side. Residues 281 to 301 (TVSRCMPAGILIGVVVLIFSL) traverse the membrane as a helical segment. Residues 302 to 304 (QHE) are Periplasmic-facing. The helical transmembrane segment at 305-325 (LLPAYALLMLIGVLGGFFVVP) threads the bilayer. Over 326-343 (LNALLQERGKKSVGAGNA) the chain is Cytoplasmic. A helical membrane pass occupies residues 344-364 (IAVQNLGENSAMLLMLGIYSL). Topologically, residues 365–366 (AV) are periplasmic. Residues 367-387 (MVGIPVVPIGIGFGTLFALAI) form a helical membrane-spanning segment. Topologically, residues 388 to 397 (TALWIWQRRH) are cytoplasmic.

This sequence belongs to the major facilitator superfamily. LplT (TC 2.A.1.42) family.

The protein localises to the cell inner membrane. Functionally, catalyzes the facilitated diffusion of 2-acyl-glycero-3-phosphoethanolamine (2-acyl-GPE) into the cell. This is Lysophospholipid transporter LplT from Escherichia coli O9:H4 (strain HS).